Here is a 499-residue protein sequence, read N- to C-terminus: uncharacterized protein (499 aa).

Transmembrane regions (helical) follow at residues 5 to 25 (FLLVLIPVLILYFYNLGYNAV), 79 to 99 (LGLRFFHALLGVFTGVLTYLL), 110 to 130 (ALLSFLILSLSFIFIANARYA), 132 to 152 (PEVPFTFFITLSLYLWYEYFT), 170 to 190 (VLTKGPAGFVLPAGVVFFYLL), 203 to 223 (YAGTLMVFLLSGWWFLYQYLV), 252 to 272 (ALDINVSFLPYSFLFFFALFW), 286 to 306 (VWFSFIFLIFSIVKMKIPVYI), 332 to 352 (LSLIFLWTVLVLATLALSLYF), 354 to 374 (FSATLFPLIPLLLLPFFLKKY), and 377 to 397 (LPAFGAFAFLFYLSSVILPYV).

The protein belongs to the glycosyltransferase 39 family.

The protein localises to the cell membrane. This is an uncharacterized protein from Aquifex aeolicus (strain VF5).